The primary structure comprises 399 residues: Protein translocase subunit SecD (399 aa).

Transmembrane regions (helical) follow at residues 7 to 27 (IKTA…LTFP), 239 to 259 (VIGA…LGLV), 262 to 282 (IALL…NATL), 286 to 306 (GVAG…LIFA), 329 to 351 (ALRA…FYFG), and 357 to 381 (GFAV…RTLL).

Belongs to the SecD/SecF family. SecD subfamily. As to quaternary structure, forms a complex with SecF. Part of the essential Sec protein translocation apparatus which comprises SecA, SecYEG and auxiliary proteins SecDF. Other proteins may also be involved.

It localises to the cell inner membrane. Functionally, part of the Sec protein translocase complex. Interacts with the SecYEG preprotein conducting channel. SecDF uses the proton motive force (PMF) to complete protein translocation after the ATP-dependent function of SecA. This Dictyoglomus turgidum (strain DSM 6724 / Z-1310) protein is Protein translocase subunit SecD.